A 207-amino-acid polypeptide reads, in one-letter code: ATP synthase subunit b 2 (207 aa).

Residues 53–72 (TYASQLLWLVITFGVFYLLM) traverse the membrane as a helical segment.

It belongs to the ATPase B chain family. As to quaternary structure, F-type ATPases have 2 components, F(1) - the catalytic core - and F(0) - the membrane proton channel. F(1) has five subunits: alpha(3), beta(3), gamma(1), delta(1), epsilon(1). F(0) has three main subunits: a(1), b(2) and c(10-14). The alpha and beta chains form an alternating ring which encloses part of the gamma chain. F(1) is attached to F(0) by a central stalk formed by the gamma and epsilon chains, while a peripheral stalk is formed by the delta and b chains.

The protein localises to the cell inner membrane. In terms of biological role, f(1)F(0) ATP synthase produces ATP from ADP in the presence of a proton or sodium gradient. F-type ATPases consist of two structural domains, F(1) containing the extramembraneous catalytic core and F(0) containing the membrane proton channel, linked together by a central stalk and a peripheral stalk. During catalysis, ATP synthesis in the catalytic domain of F(1) is coupled via a rotary mechanism of the central stalk subunits to proton translocation. Its function is as follows. Component of the F(0) channel, it forms part of the peripheral stalk, linking F(1) to F(0). The b'-subunit is a diverged and duplicated form of b found in plants and photosynthetic bacteria. The chain is ATP synthase subunit b 2 (atpF2) from Rhizobium etli (strain ATCC 51251 / DSM 11541 / JCM 21823 / NBRC 15573 / CFN 42).